Reading from the N-terminus, the 90-residue chain is Small ribosomal subunit protein bS16 (90 aa).

The protein belongs to the bacterial ribosomal protein bS16 family.

This Bacillus cytotoxicus (strain DSM 22905 / CIP 110041 / 391-98 / NVH 391-98) protein is Small ribosomal subunit protein bS16.